The following is a 430-amino-acid chain: Serine hydroxymethyltransferase (430 aa).

Residues leucine 126 and 130-132 (GHL) contribute to the (6S)-5,6,7,8-tetrahydrofolate site. Lysine 235 carries the post-translational modification N6-(pyridoxal phosphate)lysine.

This sequence belongs to the SHMT family. Homodimer. It depends on pyridoxal 5'-phosphate as a cofactor.

It is found in the cytoplasm. The catalysed reaction is (6R)-5,10-methylene-5,6,7,8-tetrahydrofolate + glycine + H2O = (6S)-5,6,7,8-tetrahydrofolate + L-serine. Its pathway is one-carbon metabolism; tetrahydrofolate interconversion. It functions in the pathway amino-acid biosynthesis; glycine biosynthesis; glycine from L-serine: step 1/1. In terms of biological role, catalyzes the reversible interconversion of serine and glycine with tetrahydrofolate (THF) serving as the one-carbon carrier. This reaction serves as the major source of one-carbon groups required for the biosynthesis of purines, thymidylate, methionine, and other important biomolecules. Also exhibits THF-independent aldolase activity toward beta-hydroxyamino acids, producing glycine and aldehydes, via a retro-aldol mechanism. The polypeptide is Serine hydroxymethyltransferase (Leifsonia xyli subsp. xyli (strain CTCB07)).